A 154-amino-acid polypeptide reads, in one-letter code: Prefoldin subunit 5 (154 aa).

Alanine 2 carries the N-acetylalanine modification. Lysine 42 carries the post-translational modification N6-acetyllysine. Serine 56 bears the Phosphoserine mark.

It belongs to the prefoldin subunit alpha family. As to quaternary structure, heterohexamer of two PFD-alpha type and four PFD-beta type subunits.

It is found in the nucleus. Functionally, binds specifically to cytosolic chaperonin (c-CPN) and transfers target proteins to it. Binds to nascent polypeptide chain and promotes folding in an environment in which there are many competing pathways for nonnative proteins. Represses the transcriptional activity of MYC. This chain is Prefoldin subunit 5 (Pfdn5), found in Mus musculus (Mouse).